Consider the following 347-residue polypeptide: Protein RecA (347 aa).

An ATP-binding site is contributed by 70–77 (GPESSGKT).

It belongs to the RecA family.

Its subcellular location is the cytoplasm. Can catalyze the hydrolysis of ATP in the presence of single-stranded DNA, the ATP-dependent uptake of single-stranded DNA by duplex DNA, and the ATP-dependent hybridization of homologous single-stranded DNAs. It interacts with LexA causing its activation and leading to its autocatalytic cleavage. This chain is Protein RecA, found in Ruegeria pomeroyi (strain ATCC 700808 / DSM 15171 / DSS-3) (Silicibacter pomeroyi).